The primary structure comprises 205 residues: Probable GTP-binding protein EngB (205 aa).

The 175-residue stretch at 29 to 203 (QGAEIAFIGR…KAVLSQWFRS (175 aa)) folds into the EngB-type G domain. GTP contacts are provided by residues 37–44 (GRSNAGKS), 64–68 (GRTQM), 82–85 (DLPG), 149–152 (TKSD), and 182–184 (FSS). Residues Ser44 and Thr66 each contribute to the Mg(2+) site.

This sequence belongs to the TRAFAC class TrmE-Era-EngA-EngB-Septin-like GTPase superfamily. EngB GTPase family. Mg(2+) is required as a cofactor.

Functionally, necessary for normal cell division and for the maintenance of normal septation. This chain is Probable GTP-binding protein EngB, found in Coxiella burnetii (strain RSA 493 / Nine Mile phase I).